The primary structure comprises 326 residues: Phospho-N-acetylmuramoyl-pentapeptide-transferase (326 aa).

The next 9 membrane-spanning stretches (helical) occupy residues 3-23 (ISIS…PAFI), 51-71 (TMGG…LALF), 79-99 (VGMI…DDFL), 115-135 (LALQ…GGDM), 138-158 (VFSY…FWLV), 169-189 (GIDG…GVIA), 195-215 (MDIL…FVFN), 221-243 (VFMG…MALH), and 306-326 (FFFW…LYLM).

Belongs to the glycosyltransferase 4 family. MraY subfamily. The cofactor is Mg(2+).

Its subcellular location is the cell membrane. It carries out the reaction UDP-N-acetyl-alpha-D-muramoyl-L-alanyl-gamma-D-glutamyl-L-lysyl-D-alanyl-D-alanine + di-trans,octa-cis-undecaprenyl phosphate = Mur2Ac(oyl-L-Ala-gamma-D-Glu-L-Lys-D-Ala-D-Ala)-di-trans,octa-cis-undecaprenyl diphosphate + UMP. It functions in the pathway cell wall biogenesis; peptidoglycan biosynthesis. Functionally, catalyzes the initial step of the lipid cycle reactions in the biosynthesis of the cell wall peptidoglycan: transfers peptidoglycan precursor phospho-MurNAc-pentapeptide from UDP-MurNAc-pentapeptide onto the lipid carrier undecaprenyl phosphate, yielding undecaprenyl-pyrophosphoryl-MurNAc-pentapeptide, known as lipid I. This Streptococcus pneumoniae (strain ATCC 700669 / Spain 23F-1) protein is Phospho-N-acetylmuramoyl-pentapeptide-transferase.